We begin with the raw amino-acid sequence, 1695 residues long: Protein TOPAZ1 (1695 aa).

Disordered stretches follow at residues 1-128, 441-474, and 725-753; these read MRRH…DDPQ, MAQTEDFKSMKSSIGKSPNEYHIEKRSSQEELRR, and AEVRQNRSKESVSMTTSGPQTLSIQNSVT. Basic residues predominate over residues 43-52; that stretch reads RRKNRQKRRM. 3 stretches are compositionally biased toward basic and acidic residues: residues 59–68, 92–113, and 459–474; these read GKDKVERDRS, SDRRGIQAAKEAELRLQTERHT, and NEYHIEKRSSQEELRR. Residues 735–753 are compositionally biased toward polar residues; that stretch reads SVSMTTSGPQTLSIQNSVT.

It is found in the cytoplasm. Its subcellular location is the cytosol. Important for normal spermatogenesis and male fertility. Specifically required for progression to the post-meiotic stages of spermatocyte development. Seems to be necessary for normal expression levels of a number of testis-expressed gene transcripts, although its role in this process is unclear. In Callithrix jacchus (White-tufted-ear marmoset), this protein is Protein TOPAZ1 (TOPAZ1).